We begin with the raw amino-acid sequence, 283 residues long: Pantothenate synthetase (283 aa).

31–38 serves as a coordination point for ATP; that stretch reads MGALHDGH. The active-site Proton donor is the His38. Gln62 provides a ligand contact to (R)-pantoate. A beta-alanine-binding site is contributed by Gln62. 148-151 serves as a coordination point for ATP; that stretch reads GKKD. Gln154 is a binding site for (R)-pantoate. ATP-binding positions include Val177 and 185–188; that span reads KSSR.

The protein belongs to the pantothenate synthetase family. As to quaternary structure, homodimer.

It is found in the cytoplasm. The catalysed reaction is (R)-pantoate + beta-alanine + ATP = (R)-pantothenate + AMP + diphosphate + H(+). Its pathway is cofactor biosynthesis; (R)-pantothenate biosynthesis; (R)-pantothenate from (R)-pantoate and beta-alanine: step 1/1. In terms of biological role, catalyzes the condensation of pantoate with beta-alanine in an ATP-dependent reaction via a pantoyl-adenylate intermediate. The protein is Pantothenate synthetase of Staphylococcus aureus (strain bovine RF122 / ET3-1).